The chain runs to 61 residues: Photosystem II reaction center protein K (61 aa).

A propeptide spanning residues 1–24 (MLNILSFIGICLNSFLYSSSFFVA) is cleaved from the precursor. Residues 40-60 (MPVIPLFFFLLAFVWQAAVSF) form a helical membrane-spanning segment.

Belongs to the PsbK family. As to quaternary structure, PSII is composed of 1 copy each of membrane proteins PsbA, PsbB, PsbC, PsbD, PsbE, PsbF, PsbH, PsbI, PsbJ, PsbK, PsbL, PsbM, PsbT, PsbX, PsbY, PsbZ, Psb30/Ycf12, at least 3 peripheral proteins of the oxygen-evolving complex and a large number of cofactors. It forms dimeric complexes.

The protein resides in the plastid. It is found in the chloroplast thylakoid membrane. In terms of biological role, one of the components of the core complex of photosystem II (PSII). PSII is a light-driven water:plastoquinone oxidoreductase that uses light energy to abstract electrons from H(2)O, generating O(2) and a proton gradient subsequently used for ATP formation. It consists of a core antenna complex that captures photons, and an electron transfer chain that converts photonic excitation into a charge separation. This Cucumis sativus (Cucumber) protein is Photosystem II reaction center protein K.